The following is a 209-amino-acid chain: GTP-binding protein RHO1 (209 aa).

Ser-2 carries the post-translational modification N-acetylserine. Residue 17-24 coordinates GTP; it reads GDGACGKT. The Effector region motif lies at 39–47; sequence YVPTVFENY. GTP contacts are provided by residues 64-68 and 122-125; these read DTAGQ and CKVD. The interval 187 to 209 is disordered; that stretch reads KSKTNGKAKKNTTEKKKKKCVLL. A compositionally biased stretch (basic residues) spans 190–209; the sequence is TNGKAKKNTTEKKKKKCVLL. Residue Cys-206 is modified to Cysteine methyl ester. Cys-206 is lipidated: S-geranylgeranyl cysteine. Residues 207–209 constitute a propeptide, removed in mature form; it reads VLL.

The protein belongs to the small GTPase superfamily. Rho family. Interacts with BEM4; the interaction is direct. Interacts with SEC3; the interaction is direct. Interacts with the GAP BAG7. Interacts with the GAP LRG1. Interacts with the GAP SAC7. Interacts with the GAP RDI1. Interacts with the 1,3-beta-glucan synthase component FKS1. Interacts with the protein kinase PKC1. Interacts with the G protein beta subunit STE4. Interacts with SKN7. Interacts with TUS1. Interacts with BNI1.

It localises to the cell membrane. The protein resides in the endosome membrane. It is found in the peroxisome membrane. The enzyme catalyses GTP + H2O = GDP + phosphate + H(+). Alternates between an inactive form bound to GDP and an active form bound to GTP. Activated by the guanine nucleotide-exchange factors (GEFs) ROM1, ROM2 and TUS1, and inactivated by GTPase-activating proteins (GAPs) BAG7, BEM2, LRG1, and SAC7, and the Rho GDP-dissociation inhibitor RDI1. The different GAPs regulate RHO1 in a target-specific manner. Functionally, acts as a central regulator in the cell wall integrity signaling pathway, which is regulated by the cell cycle and in response to various types of cell wall stress. Integrates signals from different cell surface sensors, and activates a set of effectors, regulating processes including beta-glucan synthesis at the site of wall remodeling, gene expression related to cell wall biogenesis, organization of the actin cytoskeleton, and protein- and secretory vesicle-targeting to the growth site. Activates the protein kinase C (PKC1) MAP kinase cascade, the beta-1,3-glucan synthase (FKS1), the formin BNI1, the exocyst component SEC3 and the transcription factor SKN7. This Saccharomyces cerevisiae (strain ATCC 204508 / S288c) (Baker's yeast) protein is GTP-binding protein RHO1 (RHO1).